Here is a 348-residue protein sequence, read N- to C-terminus: Outer membrane protein assembly factor BamC (348 aa).

Residues methionine 1–alanine 24 form the signal peptide. Cysteine 25 carries N-palmitoyl cysteine lipidation. Cysteine 25 carries the S-diacylglycerol cysteine lipid modification. Residues serine 211–valine 230 are disordered.

It belongs to the BamC family. Part of the Bam complex, which is composed of the outer membrane protein BamA, and four lipoproteins BamB, BamC, BamD and BamE.

It is found in the cell outer membrane. Functionally, part of the outer membrane protein assembly complex, which is involved in assembly and insertion of beta-barrel proteins into the outer membrane. This is Outer membrane protein assembly factor BamC from Xenorhabdus nematophila (strain ATCC 19061 / DSM 3370 / CCUG 14189 / LMG 1036 / NCIMB 9965 / AN6).